The primary structure comprises 162 residues: 3-hydroxyacyl-[acyl-carrier-protein] dehydratase FabZ (162 aa).

His-49 is a catalytic residue.

Belongs to the thioester dehydratase family. FabZ subfamily.

It localises to the cytoplasm. The catalysed reaction is a (3R)-hydroxyacyl-[ACP] = a (2E)-enoyl-[ACP] + H2O. Functionally, involved in unsaturated fatty acids biosynthesis. Catalyzes the dehydration of short chain beta-hydroxyacyl-ACPs and long chain saturated and unsaturated beta-hydroxyacyl-ACPs. This is 3-hydroxyacyl-[acyl-carrier-protein] dehydratase FabZ from Solibacter usitatus (strain Ellin6076).